A 634-amino-acid polypeptide reads, in one-letter code: Tyrosine-protein kinase transforming protein erbB (634 aa).

The region spanning Phe132 to Leu399 is the Protein kinase domain. ATP contacts are provided by residues Leu138 to Val146 and Lys165. The active-site Proton acceptor is Asp257.

It belongs to the protein kinase superfamily. Tyr protein kinase family. EGF receptor subfamily.

The catalysed reaction is L-tyrosyl-[protein] + ATP = O-phospho-L-tyrosyl-[protein] + ADP + H(+). This Avian leukosis virus (ALV) protein is Tyrosine-protein kinase transforming protein erbB (V-ERBB).